The following is a 277-amino-acid chain: Energy-coupling factor transporter ATP-binding protein EcfA1 (277 aa).

One can recognise an ABC transporter domain in the interval 5 to 240 (LEVENLVFKY…SEDMVEIGLD (236 aa)). 40-47 (GQNGSGKS) contributes to the ATP binding site. Glu-166 acts as the Proton acceptor in catalysis.

The protein belongs to the ABC transporter superfamily. Energy-coupling factor EcfA family. In terms of assembly, forms a stable energy-coupling factor (ECF) transporter complex composed of 2 membrane-embedded substrate-binding proteins (S component), 2 ATP-binding proteins (A component) and 2 transmembrane proteins (T component). In L.lactis forms a stable complex with EcfA' and EcfT and substrate-binding components. In E.coli forms a stable complex with EcfA', EcfT and individually with 3 tested substrate-binding components (BioY, NiaX and ThiT) with a stoichiometry of 1.1:1:1. The core ECF complex interacts with a number of substrate-specific binding components, including BioY, BioY2, HmpT, NiaX, PanT, QueT, RibU and ThiT.

It localises to the cell membrane. Its function is as follows. ATP-binding (A) component of a common energy-coupling factor (ECF) ABC-transporter complex. Unlike classic ABC transporters this ECF transporter provides the energy necessary to transport a number of different substrates. In this organism these probably include biotin, thiamine precursor, niacin, pantothenic acid, queuosine precursor, riboflavin and thiamine. Uptake of niacin or riboflavin into proteosomes containing EcfA1A2T and Niax or RibU has been demonstrated. Uptake requires hydrolyzable Mg-ATP and is substrate-specific; NiaX-containing proteosomes did not transport riboflavin. This is Energy-coupling factor transporter ATP-binding protein EcfA1 from Lactococcus lactis subsp. cremoris (strain MG1363).